We begin with the raw amino-acid sequence, 271 residues long: Autophagy-related protein 5 (271 aa).

Residue K145 forms a Glycyl lysine isopeptide (Lys-Gly) (interchain with G-Cter in ATG12) linkage.

It belongs to the ATG5 family. As to quaternary structure, conjugated with ATG12. Interacts with ATG10. The ATG5-ATG12 conjugate forms a complex with several units of ATG16. The ATG12-ATG5 conjugate also associates with ATG3. Conjugated to ATG12; which is essential for autophagy. Conjugation with ATG12 involves ATG7 as an E1-like activating enzyme and ATG10 as an E2-like conjugating enzyme.

The protein resides in the preautophagosomal structure membrane. Involved in cytoplasm to vacuole transport (Cvt) and autophagic vesicle formation. Autophagy is essential for maintenance of amino acid levels and protein synthesis under nitrogen starvation. Required for selective autophagic degradation of the nucleus (nucleophagy). Also required for mitophagy, which eliminates defective or superfluous mitochondria in order to fulfill cellular energy requirements and prevent excess ROS production. Conjugation with ATG12, through a ubiquitin-like conjugating system involving ATG7 as an E1-like activating enzyme and ATG10 as an E2-like conjugating enzyme, is essential for its function. The ATG12-ATG5 conjugate acts as an E3-like enzyme which is required for lipidation of ATG8 and ATG8 association to the vesicle membranes. ATG12-ATG5 rearranges the ATG3 catalytic center and enhances its E2 activity. The chain is Autophagy-related protein 5 from Kluyveromyces marxianus (strain DMKU3-1042 / BCC 29191 / NBRC 104275) (Yeast).